The chain runs to 168 residues: Bifunctional protein PyrR (168 aa).

Residues 90-102 (LVLIDDVLMSGRT) carry the PRPP-binding motif.

This sequence belongs to the purine/pyrimidine phosphoribosyltransferase family. PyrR subfamily.

The catalysed reaction is UMP + diphosphate = 5-phospho-alpha-D-ribose 1-diphosphate + uracil. In terms of biological role, regulates the transcription of the pyrimidine nucleotide (pyr) operon in response to exogenous pyrimidines. Its function is as follows. Also displays a weak uracil phosphoribosyltransferase activity which is not physiologically significant. This Pseudomonas fluorescens (strain ATCC BAA-477 / NRRL B-23932 / Pf-5) protein is Bifunctional protein PyrR.